A 341-amino-acid polypeptide reads, in one-letter code: DNA-directed RNA polymerase subunit alpha (341 aa).

Residues M1 to E233 are alpha N-terminal domain (alpha-NTD). Positions I266–R341 are alpha C-terminal domain (alpha-CTD).

This sequence belongs to the RNA polymerase alpha chain family. In plastids the minimal PEP RNA polymerase catalytic core is composed of four subunits: alpha, beta, beta', and beta''. When a (nuclear-encoded) sigma factor is associated with the core the holoenzyme is formed, which can initiate transcription.

The protein localises to the plastid. It localises to the chloroplast. The enzyme catalyses RNA(n) + a ribonucleoside 5'-triphosphate = RNA(n+1) + diphosphate. DNA-dependent RNA polymerase catalyzes the transcription of DNA into RNA using the four ribonucleoside triphosphates as substrates. This is DNA-directed RNA polymerase subunit alpha from Nymphaea alba (White water-lily).